Reading from the N-terminus, the 574-residue chain is Desiccation/radiation resistance protein DR_1769 (574 aa).

An N-terminal signal peptide occupies residues 1 to 33 (MPDPAARRFSLPPFPLAALALSVALLGAPASLA). Positions 400 to 438 (TAQTQARQAAAAASTSQQPRLPTLAQAPAPTPAPAQTTP) are enriched in low complexity. A disordered region spans residues 400–461 (TAQTQARQAA…APVPPVASPA (62 aa)). Over residues 439–459 (RPQPTPAQPATPAAPVPPVAS) the composition is skewed to pro residues.

Functionally, plays an important role in resistance to desiccation and radiation, maybe by protecting genome integrity under extreme conditions. The chain is Desiccation/radiation resistance protein DR_1769 from Deinococcus radiodurans (strain ATCC 13939 / DSM 20539 / JCM 16871 / CCUG 27074 / LMG 4051 / NBRC 15346 / NCIMB 9279 / VKM B-1422 / R1).